The chain runs to 247 residues: Sugar fermentation stimulation protein homolog (247 aa).

Belongs to the SfsA family.

In Aeromonas salmonicida (strain A449), this protein is Sugar fermentation stimulation protein homolog.